Reading from the N-terminus, the 427-residue chain is Trigger factor (427 aa).

The 86-residue stretch at 163–248 folds into the PPIase FKBP-type domain; the sequence is GDTVVIDFVG…IHEVKEKEVP (86 aa).

It belongs to the FKBP-type PPIase family. Tig subfamily.

Its subcellular location is the cytoplasm. It catalyses the reaction [protein]-peptidylproline (omega=180) = [protein]-peptidylproline (omega=0). In terms of biological role, involved in protein export. Acts as a chaperone by maintaining the newly synthesized protein in an open conformation. Functions as a peptidyl-prolyl cis-trans isomerase. The protein is Trigger factor of Streptococcus gordonii (strain Challis / ATCC 35105 / BCRC 15272 / CH1 / DL1 / V288).